Here is a 343-residue protein sequence, read N- to C-terminus: Biotin synthase 2 (343 aa).

Positions 58–285 (NEVQLSTLLS…LTMVRLSAGR (228 aa)) constitute a Radical SAM core domain. The [4Fe-4S] cluster site is built by Cys-73, Cys-77, and Cys-80. [2Fe-2S] cluster-binding residues include Cys-117, Cys-148, Cys-208, and Arg-280.

It belongs to the radical SAM superfamily. Biotin synthase family. As to quaternary structure, homodimer. It depends on [4Fe-4S] cluster as a cofactor. Requires [2Fe-2S] cluster as cofactor.

The catalysed reaction is (4R,5S)-dethiobiotin + (sulfur carrier)-SH + 2 reduced [2Fe-2S]-[ferredoxin] + 2 S-adenosyl-L-methionine = (sulfur carrier)-H + biotin + 2 5'-deoxyadenosine + 2 L-methionine + 2 oxidized [2Fe-2S]-[ferredoxin]. It participates in cofactor biosynthesis; biotin biosynthesis; biotin from 7,8-diaminononanoate: step 2/2. Functionally, catalyzes the conversion of dethiobiotin (DTB) to biotin by the insertion of a sulfur atom into dethiobiotin via a radical-based mechanism. This is Biotin synthase 2 from Polaromonas sp. (strain JS666 / ATCC BAA-500).